Consider the following 815-residue polypeptide: Lon protease 1 (815 aa).

The region spanning 12 to 205 is the Lon N-terminal domain; that stretch reads VFVLALRDVV…HILKTIETEI (194 aa). 358 to 365 serves as a coordination point for ATP; sequence GPPGVGKT. Residues 594-775 form the Lon proteolytic domain; sequence TNQIGQVAGL…DEVFKIALES (182 aa). Active-site residues include Ser-681 and Lys-724.

Belongs to the peptidase S16 family. Homohexamer. Organized in a ring with a central cavity.

The protein resides in the cytoplasm. The enzyme catalyses Hydrolysis of proteins in presence of ATP.. In terms of biological role, ATP-dependent serine protease that mediates the selective degradation of mutant and abnormal proteins as well as certain short-lived regulatory proteins. Required for cellular homeostasis and for survival from DNA damage and developmental changes induced by stress. Degrades polypeptides processively to yield small peptide fragments that are 5 to 10 amino acids long. Binds to DNA in a double-stranded, site-specific manner. The chain is Lon protease 1 from Hydrogenovibrio crunogenus (strain DSM 25203 / XCL-2) (Thiomicrospira crunogena).